We begin with the raw amino-acid sequence, 333 residues long: Procathepsin L (333 aa).

A signal peptide spans methionine 1–alanine 17. A propeptide spans threonine 18–glutamate 113 (activation peptide). Residue glutamate 122 coordinates Zn(2+). 2 disulfide bridges follow: cysteine 135–cysteine 178 and cysteine 169–cysteine 211. Cysteine 138 is an active-site residue. Positions 163, 184, 199, 205, 209, 227, 250, 253, 273, and 275 each coordinate Zn(2+). Cysteine 269 and cysteine 322 are oxidised to a cystine. Residue histidine 276 is part of the active site. The propeptide occupies glutamate 289–aspartate 291. Asparagine 300 is a catalytic residue.

This sequence belongs to the peptidase C1 family. As to quaternary structure, dimer of a heavy and a light chain linked by disulfide bonds. Interacts with Long isoform of CD74/Ii chain; the interaction stabilizes the conformation of mature CTSL. In terms of processing, during export along the endocytic pathway, pro-CTSL undergoes several proteolytic cleavages to generate the CTSL single-chain and two-chain mature forms, composed of a heavy chain linked to a light chain by disulfide bonds. Autocleavage; produces the single-chain CTSL after cleavage of the propeptide. The cleavage can be intermolecular.

The protein resides in the lysosome. It is found in the apical cell membrane. The protein localises to the cytoplasmic vesicle. Its subcellular location is the secretory vesicle. It localises to the chromaffin granule. The protein resides in the secreted. It is found in the extracellular space. It carries out the reaction Specificity close to that of papain. As compared to cathepsin B, cathepsin L exhibits higher activity toward protein substrates, but has little activity on Z-Arg-Arg-NHMec, and no peptidyl-dipeptidase activity.. With respect to regulation, inhibited by the propeptide produced by autocleavage. Long isoform of CD74/Ii chain stabilizes the conformation of mature CTSL by binding to its active site and serving as a chaperone to help maintain a pool of mature enzyme in endocytic compartments and extracellular space of APCs. IFNG enhances the conversion into the CTSL mature and active form. Inhibited by CST6. Inhibited by the glycopeptide antibiotic teicoplanin. Inhibited by amantadine. Thiol protease important for the overall degradation of proteins in lysosomes. Plays a critical for normal cellular functions such as general protein turnover, antigen processing and bone remodeling. Involved in the solubilization of cross-linked TG/thyroglobulin and in the subsequent release of thyroid hormone thyroxine (T4) by limited proteolysis of TG/thyroglobulin in the thyroid follicle lumen. In neuroendocrine chromaffin cells secretory vesicles, catalyzes the prohormone proenkephalin processing to the active enkephalin peptide neurotransmitter. In thymus, regulates CD4(+) T cell positive selection by generating the major histocompatibility complex class II (MHCII) bound peptide ligands presented by cortical thymic epithelial cells. Also mediates invariant chain processing in cortical thymic epithelial cells. Major elastin-degrading enzyme at neutral pH. Accumulates as a mature and active enzyme in the extracellular space of antigen presenting cells (APCs) to regulate degradation of the extracellular matrix in the course of inflammation. Secreted form generates endostatin from COL18A1. Critical for cardiac morphology and function. Plays an important role in hair follicle morphogenesis and cycling, as well as epidermal differentiation. Required for maximal stimulation of steroidogenesis by TIMP1. This chain is Procathepsin L (CTSL), found in Chlorocebus aethiops (Green monkey).